Here is a 622-residue protein sequence, read N- to C-terminus: MSLDISQFPVLAQANTPNELRQLPQALLPQLADELREFLLKSVGMSSGHFASGLGTVELTVALHYVYNTPFDRLIWDVGHQAYPHKILTGRRDRMHTIRQKNGLHPFPWREESEYDTFSVGHSGTSISAALAMAVAAEKEQAGRKVVAVIGDGAMTGGMVFEAMNHAGDLHNDMLMVLNDNEMSISENVGALNNHLAQLMSGRLYTTIRESSKKVLKGMPVIKEMAKRTEEHLKGMVVPGTLFEELGFNYIGPIDGHDVDALVETLRNMRSLKGPQVLHIMTKKGRGYEPAEKDPIGWHAVPKFDPSQFKKPATKPGLPTFSQVFGKWLCDIAEQDEKVLGITPAMREGSGMVEFSQRFPKQYFDAAIAEQHAVTLGAGFACEGFKPVVAIYSTFLQRGYDQLIHDVALQRLPVLFAIDRGGIVGADGPTHQGAFDLSFMRCIPNMVIMAPSDENECRQMLYTGYCYDAGPSAVRYPRGSATGATQVEAMTALPIGKGVIKRLGKRIAMLNFGTTLAAALTAAESLDATVVDMRFVKPLDVDLVKEMAQTHDVLVTVEENAIMGGAGSGVLELLQKLKMPKPVLQIGLPDEFIKHGSPEEVTHDLQLDAEGMLAQINAFLAD.

Thiamine diphosphate-binding positions include histidine 80 and 121–123; that span reads GHS. Position 152 (aspartate 152) interacts with Mg(2+). Residues 153 to 154, asparagine 181, tyrosine 288, and glutamate 370 each bind thiamine diphosphate; that span reads GA. Residue asparagine 181 participates in Mg(2+) binding.

This sequence belongs to the transketolase family. DXPS subfamily. As to quaternary structure, homodimer. Mg(2+) serves as cofactor. Thiamine diphosphate is required as a cofactor.

It carries out the reaction D-glyceraldehyde 3-phosphate + pyruvate + H(+) = 1-deoxy-D-xylulose 5-phosphate + CO2. It functions in the pathway metabolic intermediate biosynthesis; 1-deoxy-D-xylulose 5-phosphate biosynthesis; 1-deoxy-D-xylulose 5-phosphate from D-glyceraldehyde 3-phosphate and pyruvate: step 1/1. Its function is as follows. Catalyzes the acyloin condensation reaction between C atoms 2 and 3 of pyruvate and glyceraldehyde 3-phosphate to yield 1-deoxy-D-xylulose-5-phosphate (DXP). The polypeptide is 1-deoxy-D-xylulose-5-phosphate synthase (Shewanella sp. (strain MR-4)).